Reading from the N-terminus, the 115-residue chain is Putative membrane protein insertion efficiency factor (115 aa).

The protein belongs to the UPF0161 family.

It is found in the cell membrane. Could be involved in insertion of integral membrane proteins into the membrane. In Mycobacterium avium (strain 104), this protein is Putative membrane protein insertion efficiency factor.